The following is a 104-amino-acid chain: Ribonuclease P protein component 4 (104 aa).

Positions 57, 60, 83, and 86 each coordinate Zn(2+).

This sequence belongs to the eukaryotic/archaeal RNase P protein component 4 family. Consists of a catalytic RNA component and at least 4-5 protein subunits. Requires Zn(2+) as cofactor.

The protein localises to the cytoplasm. The enzyme catalyses Endonucleolytic cleavage of RNA, removing 5'-extranucleotides from tRNA precursor.. Its function is as follows. Part of ribonuclease P, a protein complex that generates mature tRNA molecules by cleaving their 5'-ends. The sequence is that of Ribonuclease P protein component 4 from Saccharolobus islandicus (strain M.16.27) (Sulfolobus islandicus).